The following is a 618-amino-acid chain: Grainyhead-like protein 1 homolog (618 aa).

The tract at residues 1–91 (MTQEYDNKRP…EVEHPEPDHS (91 aa)) is transcription activation. Basic and acidic residues predominate over residues 74 to 92 (RRSSTAKPEVEHPEPDHSK). A disordered region spans residues 74–94 (RRSSTAKPEVEHPEPDHSKRN). A Phosphothreonine modification is found at T208. The region spanning 248 to 474 (SGNNFEYTLE…DLDTQPVLFI (227 aa)) is the Grh/CP2 DB domain. Interaction with DNA regions lie at residues 380-389 (TDFSSQKGVK) and 427-430 (RKIR).

The protein belongs to the grh/CP2 family. Grainyhead subfamily. In terms of assembly, binds DNA as homodimer. Homodimer, also forms heterodimers with GRHL2 or GRHL3. Post-translationally, methylation at Arg-9 and Lys-116 may be involved in regulating transcriptional activation.

The protein resides in the nucleus. Transcription factor involved in epithelial development. Binds directly to the consensus DNA sequence 5'-AACCGGTT-3'. Important regulator of DSG1 in the context of hair anchorage and epidermal differentiation, participates in the maintenance of the skin barrier. There is no genetic interaction with GRHL3, nor functional cooperativity due to diverse target gene selectivity during epithelia development. May play a role in regulating glucose homeostasis and insulin signaling. The chain is Grainyhead-like protein 1 homolog (GRHL1) from Pongo abelii (Sumatran orangutan).